The primary structure comprises 341 residues: 3-keto-steroid reductase/17-beta-hydroxysteroid dehydrogenase 7 (341 aa).

Topologically, residues 1–229 (MRKVVLITGA…VACPGTALTN (229 aa)) are extracellular. Residue 8–15 (TGASSGIG) coordinates NAD(+). Asparagine 37 carries N-linked (GlcNAc...) asparagine glycosylation. Substrate is bound at residue serine 171. An N-linked (GlcNAc...) asparagine glycan is attached at asparagine 178. Catalysis depends on tyrosine 193, which acts as the Proton acceptor. N-linked (GlcNAc...) asparagine glycosylation is present at asparagine 229. The chain crosses the membrane as a helical span at residues 230 to 250 (LTYGILPPFIWTLLMPAILLL). The Cytoplasmic portion of the chain corresponds to 251–341 (RFFANAFTLT…NQARLSGSCL (91 aa)).

This sequence belongs to the short-chain dehydrogenases/reductases (SDR) family. ERG27 subfamily. In terms of assembly, binds to the short form of prolactin receptor. Phosphorylated. As to expression, highly expressed in adrenal gland, liver, lung and thymus. Expressed in breast, ovaries, pituitary gland, pregnant uterus, prostate, kidney, lymph node, small intestine, spinal cord and trachea. Weakly expressed in all other tissues tested. In terms of tissue distribution, expressed in eye ciliary epithelial cells and neuroendocrine cells.

It localises to the endoplasmic reticulum membrane. It catalyses the reaction 17beta-estradiol + NADP(+) = estrone + NADPH + H(+). It carries out the reaction a 3beta-hydroxysteroid + NADP(+) = a 3-oxosteroid + NADPH + H(+). The catalysed reaction is 3-dehydro-4alpha-methylzymosterol + NADPH + H(+) = 4alpha-methylzymosterol + NADP(+). The enzyme catalyses zymosterone + NADPH + H(+) = zymosterol + NADP(+). It catalyses the reaction 4alpha-methyl-5alpha-cholest-8-en-3-one + NADPH + H(+) = 4alpha-methyl-5alpha-cholest-8-en-3beta-ol + NADP(+). It carries out the reaction 4alpha-methyl-5alpha-cholest-7-en-3beta-ol + NADP(+) = 4alpha-methyl-5alpha-cholest-7-en-3-one + NADPH + H(+). The catalysed reaction is 5alpha-cholest-8-en-3-one + NADPH + H(+) = 5alpha-cholest-8-en-3beta-ol + NADP(+). The enzyme catalyses 5alpha-androstane-3beta,17beta-diol + NADP(+) = 17beta-hydroxy-5alpha-androstan-3-one + NADPH + H(+). It catalyses the reaction progesterone + NADPH + H(+) = 3beta-hydroxypregn-4-ene-20-one + NADP(+). It participates in steroid biosynthesis; estrogen biosynthesis. It functions in the pathway steroid biosynthesis; zymosterol biosynthesis; zymosterol from lanosterol: step 5/6. With respect to regulation, estradiol 17-beta-dehydrogenase and dihydrotestosterone oxidoreductase activities are selectively inhibited by 4-methyl-4-aza-5alpha-androstane derivatives, such as 17beta-[(N-Heptyl)methylamino]-4-aza-5r-androstan-3-one and 17beta-(N-Decylformamido)-4-aza-5r-androstan-3-one. Bifunctional enzyme involved in steroid-hormone metabolism and cholesterol biosynthesis. Catalyzes the NADP(H)-dependent reduction of estrogens and androgens and regulates the biological potency of these steroids. Converts estrone (E1) to a more potent estrogen, 17beta-estradiol (E2). Converts dihydrotestosterone (DHT) to its inactive form 5a-androstane-3b,17b-diol. Converts moderately progesterone to 3beta-hydroxypregn-4-ene-20-one, leading to its inactivation. Additionally, participates in the post-squalene cholesterol biosynthesis, as a 3-ketosteroid reductase. Functionally, does not have enzymatic activities toward E1 and DHT. This Homo sapiens (Human) protein is 3-keto-steroid reductase/17-beta-hydroxysteroid dehydrogenase 7 (HSD17B7).